The primary structure comprises 326 residues: MSKSNQKIASIEQLSNNEGIISALAFDQRGALKRMMAKHQTEEPTVAQIEQLKVLVAEELTQYASSILLDPEYGLPASDARNKDCGLLLAYEKTGYDVNAKGRLPDCLVEWSAKRLKEQGANAVKFLLYYDVDDTEEINVQKKAYIERIGSECVAEDIPFFLEVLTYDDNIPDNGSVEFAKVKPRKVNEAMKLFSEPRFNVDVLKVEVPVNMKYVEGFAEGEVVYTKEEAAQHFKDQDVATHLPYIYLSAGVSAELFQETLKFAHEAGAKFNGVLCGRATWSGAVQVYIEQGEDAAREWLRTTGFKNIDDLNKVLKDTATSWKQRK.

This sequence belongs to the aldolase LacD family.

It catalyses the reaction D-tagatofuranose 1,6-bisphosphate = D-glyceraldehyde 3-phosphate + dihydroxyacetone phosphate. Its pathway is carbohydrate metabolism; D-tagatose 6-phosphate degradation; D-glyceraldehyde 3-phosphate and glycerone phosphate from D-tagatose 6-phosphate: step 2/2. This Staphylococcus aureus (strain bovine RF122 / ET3-1) protein is Tagatose 1,6-diphosphate aldolase.